A 215-amino-acid chain; its full sequence is HTH-type transcriptional regulator for conjugative element R391 (215 aa).

The HTH cro/C1-type domain maps to 8 to 61; the sequence is LNHALQLTGVTQSELARRIGIKQQSISQICSGKSARSRYTMQIAEALRVNAHWL. A DNA-binding region (H-T-H motif) is located at residues 19 to 38; sequence QSELARRIGIKQQSISQICS.

May control the expression of the integrase and inhibit excision of the mobile element R391, and regulate the expression of other genes as well. This is HTH-type transcriptional regulator for conjugative element R391 from Providencia rettgeri.